Reading from the N-terminus, the 126-residue chain is Aspartate 1-decarboxylase (126 aa).

S25 serves as the catalytic Schiff-base intermediate with substrate; via pyruvic acid. S25 bears the Pyruvic acid (Ser) mark. T57 contacts substrate. The active-site Proton donor is Y58. 73 to 75 (GAA) contacts substrate.

This sequence belongs to the PanD family. In terms of assembly, heterooctamer of four alpha and four beta subunits. It depends on pyruvate as a cofactor. In terms of processing, is synthesized initially as an inactive proenzyme, which is activated by self-cleavage at a specific serine bond to produce a beta-subunit with a hydroxyl group at its C-terminus and an alpha-subunit with a pyruvoyl group at its N-terminus.

It is found in the cytoplasm. It carries out the reaction L-aspartate + H(+) = beta-alanine + CO2. It participates in cofactor biosynthesis; (R)-pantothenate biosynthesis; beta-alanine from L-aspartate: step 1/1. Its function is as follows. Catalyzes the pyruvoyl-dependent decarboxylation of aspartate to produce beta-alanine. In Salmonella arizonae (strain ATCC BAA-731 / CDC346-86 / RSK2980), this protein is Aspartate 1-decarboxylase.